Consider the following 205-residue polypeptide: Proteasome subunit beta type-3 (205 aa).

Belongs to the peptidase T1B family. As to quaternary structure, the 26S proteasome consists of a 20S proteasome core and two 19S regulatory subunits. The 20S proteasome core is composed of 28 subunits that are arranged in four stacked rings, resulting in a barrel-shaped structure. The two end rings are each formed by seven alpha subunits, and the two central rings are each formed by seven beta subunits. The catalytic chamber with the active sites is on the inside of the barrel.

Its subcellular location is the cytoplasm. It is found in the nucleus. Functionally, non-catalytic component of the proteasome, a multicatalytic proteinase complex which is characterized by its ability to cleave peptides with Arg, Phe, Tyr, Leu, and Glu adjacent to the leaving group at neutral or slightly basic pH. The proteasome has an ATP-dependent proteolytic activity. This Trypanosoma brucei brucei protein is Proteasome subunit beta type-3 (PSB3).